The primary structure comprises 554 residues: Putative mediator of RNA polymerase II transcription subunit 29 (554 aa).

4 disordered regions span residues 118-301, 330-381, 398-428, and 483-524; these read DNKA…NTEA, QQQQ…PLPQ, LENQSISGNNNNNNDGQTISPQQQQEQLQLQ, and NTNL…DDNT. Over residues 122 to 210 the composition is skewed to low complexity; that stretch reads NTNNNNNNNN…NNSINNNSNN (89 aa). Residues 167–194 adopt a coiled-coil conformation; it reads NNNNNNNYNNNNNNNNNNNNNNNNNNNN. Residues 211–225 are compositionally biased toward polar residues; that stretch reads KVGSNDNPSTAPITE. Low complexity predominate over residues 226-264; the sequence is NNTENNAGNTNNTNNNNNNNNNNNNNNNNNNNNNNNNTN. Residues 265 to 300 are compositionally biased toward polar residues; the sequence is QVAESSNISSNTTPPETTNIVNDPNSVSGGNLTNTE. Composition is skewed to low complexity over residues 330–374, 419–428, and 483–517; these read QQQQ…QQPQ, QQQQEQLQLQ, and NTNLGGNTFNTGTTPPLQQQPQPQQQQQINNPEIN. A coiled-coil region spans residues 419–486; the sequence is QQQQEQLQLQ…SLENQINTNL (68 aa).

It belongs to the Mediator complex subunit 29 family. Component of the Mediator complex.

Its subcellular location is the nucleus. Its function is as follows. Component of the Mediator complex, a coactivator involved in the regulated transcription of nearly all RNA polymerase II-dependent genes. Mediator functions as a bridge to convey information from gene-specific regulatory proteins to the basal RNA polymerase II transcription machinery. Mediator is recruited to promoters by direct interactions with regulatory proteins and serves as a scaffold for the assembly of a functional preinitiation complex with RNA polymerase II and the general transcription factors. The polypeptide is Putative mediator of RNA polymerase II transcription subunit 29 (med29) (Dictyostelium discoideum (Social amoeba)).